The following is a 132-amino-acid chain: T-cell receptor alpha chain V region CTL-F3 (132 aa).

An N-terminal signal peptide occupies residues 1–22; the sequence is MNMRPDTCSVLVLLLMLRRNNG. Residues 23–114 form a v segment region; the sequence is DSVTQTEGLV…DSALYYCALS (92 aa). A glycan (N-linked (GlcNAc...) asparagine) is linked at N43. The cysteines at positions 44 and 111 are disulfide-linked. Residues 115–132 form a j segment region; the sequence is NAGAKLTFGGGTRLTVRP.

This Mus musculus (Mouse) protein is T-cell receptor alpha chain V region CTL-F3.